The chain runs to 185 residues: Prenylated Rab acceptor protein 1 (185 aa).

The Cytoplasmic segment spans residues 1-78 (MAAQKDQQKD…RNVEYYQSNY (78 aa)). The required for interaction with prenylated RAB3A and VAMP2 stretch occupies residues 30 to 54 (AGREWLERRRATIRPWGTFVDQQRF). 2 helical membrane-spanning segments follow: residues 79-94 (VFVFLGLILYCVVTSP) and 95-112 (MLLVALAVFFGACYILYL). Residues 113-131 (RTLQSKLVLFGREVSPAHQ) lie on the Cytoplasmic side of the membrane. 2 helical membrane passes run 132–148 (YALAGGVSFPFFWLAGA) and 149–165 (GSAVFWVLGATLVLIGS). The interval 165 to 185 (SHAAFHQIEPADGEELQMEPV) is required for interaction with GDI1. Topologically, residues 166-185 (HAAFHQIEPADGEELQMEPV) are cytoplasmic. The tract at residues 175–185 (ADGEELQMEPV) is required for interaction with prenylated RAB3A and VAMP2. The tract at residues 175–185 (ADGEELQMEPV) is homodimerization.

The protein belongs to the PRA1 family. As to quaternary structure, homodimers. Interacts specifically with both prenylated Rab proteins (including RAB3A and RAB1), and VAMP2 (synaptobrevin-2), in an exclusive way. Interacts with NDRG1. Interacts with free GDI1 in the absence of Rab proteins. Also interacts with PCLO. As to expression, ubiquitous.

It localises to the cell membrane. The protein resides in the cytoplasm. Its subcellular location is the golgi apparatus. The protein localises to the cytoplasmic vesicle. It is found in the secretory vesicle. It localises to the synaptic vesicle. Functionally, general Rab protein regulator required for vesicle formation from the Golgi complex. May control vesicle docking and fusion by mediating the action of Rab GTPases to the SNARE complexes. In addition it inhibits the removal of Rab GTPases from the membrane by GDI1. This chain is Prenylated Rab acceptor protein 1 (Rabac1), found in Rattus norvegicus (Rat).